A 368-amino-acid chain; its full sequence is Phospho-N-acetylmuramoyl-pentapeptide-transferase (368 aa).

Transmembrane regions (helical) follow at residues 31 to 51 (LTSMLVTFWFGHKIIDFLYGL), 73 to 93 (TMGGLLIIGSLLISVLLWGNL), 98 to 118 (VILLSVFSLSFSVLGFADDYM), 134 to 154 (FILSILISFIFCILFFYYTGT), 175 to 195 (GPVIALGIIAIPFSILVIIGS), 213 to 233 (VLISVMTLGVIAYFSGTPIVA), 249 to 269 (VFLSALTGALFGFLWFNAHPA), 271 to 291 (VFMGDTGSLFLGATLGMIVIL), 296 to 316 (ILLLILGAIFVSEALSVILQV), and 345 to 365 (KIVIRFWIIAVILAIISLSTL).

The protein belongs to the glycosyltransferase 4 family. MraY subfamily. It depends on Mg(2+) as a cofactor.

It localises to the cell inner membrane. It catalyses the reaction UDP-N-acetyl-alpha-D-muramoyl-L-alanyl-gamma-D-glutamyl-meso-2,6-diaminopimeloyl-D-alanyl-D-alanine + di-trans,octa-cis-undecaprenyl phosphate = di-trans,octa-cis-undecaprenyl diphospho-N-acetyl-alpha-D-muramoyl-L-alanyl-D-glutamyl-meso-2,6-diaminopimeloyl-D-alanyl-D-alanine + UMP. It functions in the pathway cell wall biogenesis; peptidoglycan biosynthesis. Catalyzes the initial step of the lipid cycle reactions in the biosynthesis of the cell wall peptidoglycan: transfers peptidoglycan precursor phospho-MurNAc-pentapeptide from UDP-MurNAc-pentapeptide onto the lipid carrier undecaprenyl phosphate, yielding undecaprenyl-pyrophosphoryl-MurNAc-pentapeptide, known as lipid I. The polypeptide is Phospho-N-acetylmuramoyl-pentapeptide-transferase (Leptospira interrogans serogroup Icterohaemorrhagiae serovar copenhageni (strain Fiocruz L1-130)).